Here is a 477-residue protein sequence, read N- to C-terminus: Stromelysin-1 (477 aa).

Positions 1–17 (MKSLPILLLLCVAVCSA) are cleaved as a signal peptide. The propeptide at 18–99 (YPLDGAARGE…PRCGVPDVGH (82 aa)) is activation peptide. A Cysteine switch motif is present at residues 90–97 (PRCGVPDV). Zn(2+) is bound at residue Cys-92. Ca(2+)-binding residues include Asp-124 and Asp-158. 2 residues coordinate Zn(2+): His-168 and Asp-170. Ca(2+) contacts are provided by Asp-175, Gly-176, Gly-178, and Val-180. Zn(2+) is bound at residue His-183. The Ca(2+) site is built by Gly-190, Asn-192, and Asp-194. Zn(2+) is bound at residue His-196. The Ca(2+) site is built by Asp-198, Asp-199, and Glu-201. His-218 contacts Zn(2+). Glu-219 is a catalytic residue. The Zn(2+) site is built by His-222 and His-228. Positions 262–287 (LYGPPPDSPETPLVPTEPVPPEPGTP) are disordered. Residues 276–285 (PTEPVPPEPG) are compositionally biased toward pro residues. 4 Hemopexin repeats span residues 287 to 336 (PANC…WPSL), 337 to 383 (PSGV…GFPP), 385 to 433 (VRKI…FPGI), and 434 to 477 (DSKI…WLNC). Residues Cys-290 and Cys-477 are joined by a disulfide bond. Position 297 (Asp-297) interacts with Ca(2+). Residues Asp-389 and Asp-438 each contribute to the Ca(2+) site.

The protein belongs to the peptidase M10A family. Ca(2+) serves as cofactor. Zn(2+) is required as a cofactor. In terms of processing, directly cleaved by HTRA2 to produce active form.

It is found in the secreted. The protein localises to the extracellular space. The protein resides in the extracellular matrix. Its subcellular location is the nucleus. It localises to the cytoplasm. It catalyses the reaction Preferential cleavage where P1', P2' and P3' are hydrophobic residues.. Its activity is regulated as follows. Enzymatic activity is activated by HTRA2 in dopaminergic cells upon mitochondrial stress. In terms of biological role, metalloproteinase with a rather broad substrate specificity that can degrade fibronectin, laminin, gelatins of type I, III, IV, and V; collagens III, IV, X, and IX, and cartilage proteoglycans. Activates different molecules including growth factors, plasminogen or other matrix metalloproteinases such as MMP9. Once released into the extracellular matrix (ECM), the inactive pro-enzyme is activated by the plasmin cascade signaling pathway. Also acts intracellularly. For example, in dopaminergic neurons, gets activated by the serine protease HTRA2 upon stress and plays a pivotal role in DA neuronal degeneration by mediating microglial activation and alpha-synuclein/SNCA cleavage. In addition, plays a role in immune response and possesses antiviral activity against various viruses such as vesicular stomatitis virus, influenza A virus (H1N1) and human herpes virus 1. Mechanistically, translocates from the cytoplasm into the cell nucleus upon virus infection to influence NF-kappa-B activities. The sequence is that of Stromelysin-1 (MMP3) from Homo sapiens (Human).